A 96-amino-acid chain; its full sequence is Large ribosomal subunit protein bL28 (96 aa).

The protein belongs to the bacterial ribosomal protein bL28 family.

The chain is Large ribosomal subunit protein bL28 from Methylobacterium sp. (strain 4-46).